Consider the following 481-residue polypeptide: Glutamyl-tRNA(Gln) amidotransferase subunit A (481 aa).

Catalysis depends on charge relay system residues Lys74 and Ser149. Catalysis depends on Ser173, which acts as the Acyl-ester intermediate.

This sequence belongs to the amidase family. GatA subfamily. In terms of assembly, heterotrimer of A, B and C subunits.

The catalysed reaction is L-glutamyl-tRNA(Gln) + L-glutamine + ATP + H2O = L-glutaminyl-tRNA(Gln) + L-glutamate + ADP + phosphate + H(+). Functionally, allows the formation of correctly charged Gln-tRNA(Gln) through the transamidation of misacylated Glu-tRNA(Gln) in organisms which lack glutaminyl-tRNA synthetase. The reaction takes place in the presence of glutamine and ATP through an activated gamma-phospho-Glu-tRNA(Gln). This chain is Glutamyl-tRNA(Gln) amidotransferase subunit A, found in Francisella tularensis subsp. tularensis (strain WY96-3418).